The following is a 152-amino-acid chain: Protein eva-1 homolog A (152 aa).

Residues 1 to 60 form a necessary for the localization and biological activity region; the sequence is MRLPLSHSPEHVEMALLSNILAAYSFVSENPERAALYFVSGVCIGLVLTLAALVIRISCH. Residues 35-55 form a helical membrane-spanning segment; the sequence is ALYFVSGVCIGLVLTLAALVI. Residues 70 to 97 form a disordered region; that stretch reads KFLQDRESSSDSSDSEDGSEDTVSDLSV. The span at 82–92 shows a compositional bias: acidic residues; the sequence is SDSEDGSEDTV. Residue Thr-106 is modified to Phosphothreonine. Phosphoserine; by FAM20C is present on Ser-114.

It belongs to the EVA1 family. Expressed in lung, kidney, liver, pancreas, placenta, but not in heart and skeletal muscle.

It is found in the endoplasmic reticulum membrane. Its subcellular location is the lysosome membrane. In terms of biological role, acts as a regulator of programmed cell death, mediating both autophagy and apoptosis. This chain is Protein eva-1 homolog A (EVA1A), found in Homo sapiens (Human).